Here is a 4923-residue protein sequence, read N- to C-terminus: Bridge-like lipid transfer protein family member 1 (4923 aa).

The chain crosses the membrane as a helical span at residues 25–45 (FVWLLVATIMSCGWIIYLTYY). Disordered regions lie at residues 160-179 (NRDE…SVHI), 606-631 (HSKS…KPRW), 1203-1277 (SLHV…SARL), 1300-1334 (FSSE…DSST), 1357-1400 (TEEF…SVEG), 1471-1494 (TNKR…SEES), 1630-1660 (SAAK…DLSI), 1878-1948 (RDGV…PDSS), 2191-2235 (SKSH…LQCN), 2262-2281 (PHRA…RTGN), 2355-2375 (NTLD…QEDL), 2550-2655 (RYTA…SEQS), 2885-2910 (IRQP…VSIN), 3564-3596 (YSNS…IKVE), 3645-3695 (FSPT…RKSA), 3739-3797 (LHPS…SLQS), 3848-3884 (GMRD…AKGK), 4017-4071 (PTSA…TGPP), 4102-4124 (AVTG…SSVT), 4249-4309 (DGQT…AAAQ), and 4797-4827 (RMFA…EKEE). The segment covering 1210–1226 (SHSSASSSEENSSSSAA) has biased composition (low complexity). Over residues 1237 to 1248 (PSPSTELMNVTT) the composition is skewed to polar residues. Residues 1260–1271 (SPLRSPLKRQSS) are compositionally biased toward low complexity. Residues 1641-1658 (TEGTTPGSLSTPHGQTDL) are compositionally biased toward polar residues. Low complexity predominate over residues 1887–1898 (SSGSQTGSGYST). Residues 1907 to 1920 (NDAQSPASEPNNNS) show a composition bias toward polar residues. Acidic residues predominate over residues 1921–1931 (DSDEQDEGVES). Polar residues-rich tracts occupy residues 2208–2218 (PYQSLSYTSGD) and 2267–2281 (EQTA…RTGN). Polar residues predominate over residues 2550 to 2560 (RYTAGSSSPTP). Positions 2606 to 2624 (TRSREPRGRGTLGRSERRT) are enriched in basic and acidic residues. Over residues 3581–3595 (KRSDRPREDLPDIKV) the composition is skewed to basic and acidic residues. Over residues 3746-3770 (TEHEDLALRRSCERSSRSLDQDSPP) the composition is skewed to basic and acidic residues. Over residues 4017 to 4039 (PTSATYPSEGQHTPSSTPPSVHN) the composition is skewed to polar residues. Positions 4044 to 4056 (PGGPSTGLGSPLG) are enriched in low complexity. 3 stretches are compositionally biased toward polar residues: residues 4249 to 4268 (DGQT…TPSH), 4276 to 4286 (TGRTRSVSDSS), and 4804 to 4814 (GQKSPTTQQDE). A compositionally biased stretch (basic and acidic residues) spans 4816-4827 (SSDKKEEREKEE).

It localises to the cell membrane. It is found in the endoplasmic reticulum membrane. The protein resides in the mitochondrion membrane. In terms of biological role, tube-forming lipid transport protein which provides phosphatidylethanolamine for glycosylphosphatidylinositol (GPI) anchor synthesis in the endoplasmic reticulum. Plays a role in endosomal trafficking and endosome recycling. Also involved in the actin cytoskeleton and cilia structural dynamics. Acts as a regulator of phagocytosis. The chain is Bridge-like lipid transfer protein family member 1 (bltp1) from Danio rerio (Zebrafish).